A 299-amino-acid polypeptide reads, in one-letter code: Non-structural protein NS-S (299 aa).

The tract at residues 66-69 (PNNP) is involved in inclusion bodies formation. An interaction with host TNIP2 region spans residues 148–220 (FEGDMVIDSC…KPLLDSLYFA (73 aa)).

This sequence belongs to the Bandavirus NS-S protein family. As to quaternary structure, interacts with host TBK1; this interaction antagonizes TBK1 phosphorylation and inhibits TBK1-IRF3 interaction. Interacts with host STAT2; this interaction blocks the nuclear translocation and activation of host STAT2. Interacts with host TNIP2.

It localises to the host cytoplasm. Plays a role in the inhibition of host RLR-induced interferon-beta activation by inhibiting the phosphorylation of TANK-binding kinase 1/TBK1, thereby blocking IRF3 activation and preventing the establishment of an antiviral state. Also blocks IFN-triggered nuclear translocation and activation of host STAT2. This Alces americanus (American moose) protein is Non-structural protein NS-S (NSS).